A 301-amino-acid chain; its full sequence is Ribonuclease Z (301 aa).

Residues His63, His65, Asp67, His68, His141, Asp204, and His262 each coordinate Zn(2+). Asp67 functions as the Proton acceptor in the catalytic mechanism.

It belongs to the RNase Z family. Homodimer. Zn(2+) serves as cofactor.

The catalysed reaction is Endonucleolytic cleavage of RNA, removing extra 3' nucleotides from tRNA precursor, generating 3' termini of tRNAs. A 3'-hydroxy group is left at the tRNA terminus and a 5'-phosphoryl group is left at the trailer molecule.. In terms of biological role, zinc phosphodiesterase, which displays some tRNA 3'-processing endonuclease activity. Probably involved in tRNA maturation, by removing a 3'-trailer from precursor tRNA. This chain is Ribonuclease Z, found in Streptomyces coelicolor (strain ATCC BAA-471 / A3(2) / M145).